The following is a 167-amino-acid chain: Small ribosomal subunit protein uS5 (167 aa).

An S5 DRBM domain is found at 12 to 75 (LEDQVVSINR…DAAKKSLIEV (64 aa)).

This sequence belongs to the universal ribosomal protein uS5 family. As to quaternary structure, part of the 30S ribosomal subunit. Contacts proteins S4 and S8.

Its function is as follows. With S4 and S12 plays an important role in translational accuracy. Functionally, located at the back of the 30S subunit body where it stabilizes the conformation of the head with respect to the body. In Lacticaseibacillus paracasei (strain ATCC 334 / BCRC 17002 / CCUG 31169 / CIP 107868 / KCTC 3260 / NRRL B-441) (Lactobacillus paracasei), this protein is Small ribosomal subunit protein uS5.